A 138-amino-acid polypeptide reads, in one-letter code: ATP synthase epsilon chain (138 aa).

Belongs to the ATPase epsilon chain family. As to quaternary structure, F-type ATPases have 2 components, CF(1) - the catalytic core - and CF(0) - the membrane proton channel. CF(1) has five subunits: alpha(3), beta(3), gamma(1), delta(1), epsilon(1). CF(0) has three main subunits: a, b and c.

The protein resides in the cell inner membrane. Functionally, produces ATP from ADP in the presence of a proton gradient across the membrane. The polypeptide is ATP synthase epsilon chain (Blochmanniella floridana).